The primary structure comprises 177 residues: MTKSVIEILSAEEMRRTITRLASQIVEKAGDLTDLALLGIHTRGVPLAENIAKQIETLEGIAVPVGALDITFYRDDLDQIRVRTPSKTDIPFDLNGKNLVLIDDVIYKGRTIRAALNAVNDYGRPEVIRLAVLVDRGHRQLPIQPDFTGKKLPTAKEEKVKVYLQDLDGRDAVELIK.

A PRPP-binding motif is present at residues 99-111 (LVLIDDVIYKGRT).

The protein belongs to the purine/pyrimidine phosphoribosyltransferase family. PyrR subfamily.

It catalyses the reaction UMP + diphosphate = 5-phospho-alpha-D-ribose 1-diphosphate + uracil. Its function is as follows. Regulates the transcription of the pyrimidine nucleotide (pyr) operon in response to exogenous pyrimidines. Functionally, also displays a weak uracil phosphoribosyltransferase activity which is not physiologically significant. The polypeptide is Bifunctional protein PyrR (Picosynechococcus sp. (strain ATCC 27264 / PCC 7002 / PR-6) (Agmenellum quadruplicatum)).